The chain runs to 253 residues: Sulfoacetaldehyde reductase (253 aa).

Position 6–30 (6–30 (FITGATSGFGRAAAHRFAAAGWSLV)) interacts with NADP(+). S139 is a substrate binding site. Y152 serves as the catalytic Proton acceptor.

This sequence belongs to the short-chain dehydrogenases/reductases (SDR) family. Homodimer and heterotetramer.

It catalyses the reaction 2-hydroxyethane-1-sulfonate + NADP(+) = sulfoacetaldehyde + NADPH + H(+). Its pathway is organosulfur degradation. Its function is as follows. Catalyzes the formation of isethionate from 2-sulfoacetaldehyde in the deaminative pathway of taurine. The enzyme is specific for NADPH; NADH is not a substrate. Responsible for most of the activity observed in taurine-grown cells. The polypeptide is Sulfoacetaldehyde reductase (isfD) (Chromohalobacter salexigens (strain ATCC BAA-138 / DSM 3043 / CIP 106854 / NCIMB 13768 / 1H11)).